A 389-amino-acid polypeptide reads, in one-letter code: Chalcone synthase H2 (389 aa).

The active site involves Cys164.

The protein belongs to the thiolase-like superfamily. Chalcone/stilbene synthases family.

It localises to the cytoplasm. It carries out the reaction (E)-4-coumaroyl-CoA + 3 malonyl-CoA + 3 H(+) = 2',4,4',6'-tetrahydroxychalcone + 3 CO2 + 4 CoA. It participates in secondary metabolite biosynthesis; flavonoid biosynthesis. Its function is as follows. Involved in the biosynthesis of prenylated phenolics natural products which contribute to the bitter taste of beer and display broad biological activities. Chalcone synthase that can use 4-coumaroyl-CoA to produce 4,2',4',6'-tetrahydroxychalcone (also termed naringenin-chalcone or chalcone) which can, under specific conditions, spontaneously isomerize into naringenin. The chain is Chalcone synthase H2 from Humulus lupulus (European hop).